Consider the following 454-residue polypeptide: Protein disulfide-isomerase TMX3 (454 aa).

An N-terminal signal peptide occupies residues 1 to 24 (MAAWKSWTALRLCATVVVLDMVVC). One can recognise a Thioredoxin domain in the interval 25–128 (KGFVEDLDES…KDDIIEFAHR (104 aa)). Over 25-375 (KGFVEDLDES…TIVSIFKSSP (351 aa)) the chain is Lumenal. Active-site nucleophile residues include cysteine 53 and cysteine 56. Cysteine 53 and cysteine 56 form a disulfide bridge. N-linked (GlcNAc...) asparagine glycosylation is found at asparagine 258 and asparagine 313. Residues 376–396 (LMGCFLFGLPLGVISIMCYGI) traverse the membrane as a helical segment. Residues 397–454 (YTADTDGGYIEERYEVSKSENENQEQIEESKEQQEPSSGGSVVPTVQEPKDVLEKKKD) lie on the Cytoplasmic side of the membrane. Positions 412-454 (VSKSENENQEQIEESKEQQEPSSGGSVVPTVQEPKDVLEKKKD) are disordered. Over residues 444-454 (EPKDVLEKKKD) the composition is skewed to basic and acidic residues. The short motif at 451-454 (KKKD) is the Di-lysine motif element.

This sequence belongs to the protein disulfide isomerase family. In terms of processing, N-glycosylated. In terms of tissue distribution, widely expressed. Expressed in brain, testis, lung, skin, kidney, uterus, bone, stomach, liver, prostate, placenta, eye and muscle.

The protein resides in the endoplasmic reticulum membrane. The catalysed reaction is Catalyzes the rearrangement of -S-S- bonds in proteins.. In terms of biological role, probable disulfide isomerase, which participates in the folding of proteins containing disulfide bonds. May act as a dithiol oxidase. Acts as a regulator of endoplasmic reticulum-mitochondria contact sites via its ability to regulate redox signals. The polypeptide is Protein disulfide-isomerase TMX3 (TMX3) (Homo sapiens (Human)).